The sequence spans 507 residues: MSSDKFKLDTLFDDNDEIIEPDGADVKKRNVAYYYHKDVGHFHYGQLHPMKPQRLVVCNDLVVSYEMPKYMTVVESPKLDAADISVFHTEDYVNFLQTVTPKLGLTMPDDVLRQFNIGEDCPIFAGLWDYCTLYAGGSVEGARRLNHKMNDIVINWPGGLHHAKKSEASGFCYVNDIVLGILELLKYHKRVLYIDIDIHHGDGVQEAFNNSDRVMTVSFHRFGQYFPGSGSIMDKGVGPGKYFAINVPLMAAIRDEPYLKLFESVISGVEENFNPEAIVLQCGSDSLCEDRLGQFALSFNAHARAVKYVKSLGKPLMVLGGGGYTLRNVARCWALETGVILGLRMDDEIPGTSLYSHYFTPRLLRPNLVPKMNDANSAAYLASIEKETLACLRMIRGAPSVQMQNIVGIRLDEIEQIEENERLQKSSKSSIEYEVGKVSEKMEEECFVEEDSKPPSFPPGQDPRRIGQYWGYDRSGLAPPRSHSDVIEEAKYEDRDRRKDLNIPGIP.

Positions 29–342 (RNVAYYYHKD…WALETGVILG (314 aa)) are histone deacetylase. H162 is an active-site residue. Positions 444-507 (EECFVEEDSK…RKDLNIPGIP (64 aa)) are disordered. The segment covering 482–501 (SHSDVIEEAKYEDRDRRKDL) has biased composition (basic and acidic residues).

The protein belongs to the histone deacetylase family. HD type 1 subfamily. May be a component of a histone deacetylase complex containing saeg-2, saeg-1 and hda-2.

The protein resides in the nucleus. The catalysed reaction is N(6)-acetyl-L-lysyl-[histone] + H2O = L-lysyl-[histone] + acetate. Probably responsible for the deacetylation of lysine residues on the N-terminal part of the core histones (H2A, H2B, H3 and H4). Histone deacetylation gives a tag for epigenetic repression and plays an important role in transcriptional regulation, cell cycle progression and developmental events. Histone deacetylases act via the formation of large multiprotein complexes. As a likely component of a histone deacetylase complex, together with saeg-1 and hda-2, functions downstream of the cAMP-dependent kinase egl-4 to regulate the expression of genes required for egg-laying and forgaging. This chain is Putative histone deacetylase 2 (hda-2), found in Caenorhabditis elegans.